A 194-amino-acid polypeptide reads, in one-letter code: Putative NAD(P)H nitroreductase YfhC (194 aa).

FMN-binding positions include 20 to 22, 147 to 148, and arginine 188; these read RRS and KI.

It belongs to the nitroreductase family. FMN serves as cofactor.

The sequence is that of Putative NAD(P)H nitroreductase YfhC (yfhC) from Bacillus subtilis (strain 168).